Consider the following 565-residue polypeptide: DNA mismatch repair protein MutL (565 aa).

Belongs to the DNA mismatch repair MutL/HexB family.

In terms of biological role, this protein is involved in the repair of mismatches in DNA. It is required for dam-dependent methyl-directed DNA mismatch repair. May act as a 'molecular matchmaker', a protein that promotes the formation of a stable complex between two or more DNA-binding proteins in an ATP-dependent manner without itself being part of a final effector complex. This chain is DNA mismatch repair protein MutL, found in Desulforudis audaxviator (strain MP104C).